The following is a 530-amino-acid chain: Phosphoenolpyruvate carboxykinase (ATP) (530 aa).

Positions 58, 195, and 201 each coordinate substrate. ATP-binding positions include K201, H220, and 236–244; that span reads GLSGTGKTT. Mn(2+)-binding residues include K201 and H220. Position 257 (D257) interacts with Mn(2+). Residues E285, R321, 440-441, and T446 contribute to the ATP site; that span reads RI. Residue R321 coordinates substrate.

Belongs to the phosphoenolpyruvate carboxykinase (ATP) family. The cofactor is Mn(2+).

The protein resides in the cytoplasm. It catalyses the reaction oxaloacetate + ATP = phosphoenolpyruvate + ADP + CO2. It functions in the pathway carbohydrate biosynthesis; gluconeogenesis. Its function is as follows. Involved in the gluconeogenesis. Catalyzes the conversion of oxaloacetate (OAA) to phosphoenolpyruvate (PEP) through direct phosphoryl transfer between the nucleoside triphosphate and OAA. This is Phosphoenolpyruvate carboxykinase (ATP) from Staphylococcus epidermidis (strain ATCC 35984 / DSM 28319 / BCRC 17069 / CCUG 31568 / BM 3577 / RP62A).